The chain runs to 331 residues: Leucine-rich repeat-containing protein 26 (331 aa).

A signal peptide spans 1-26; it reads MRGSFFSRLPPQLSLLLLLSLRRVWT. Over 27–261 the chain is Extracellular; the sequence is QEDIGTAPSK…QCTQSLAARD (235 aa). The LRRNT domain maps to 34 to 71; the sequence is PSKSPVAPECPEACSCSLGGKANCSALALPAVPADLSW. Intrachain disulfides connect Cys-43–Cys-49 and Cys-47–Cys-57. LRR repeat units follow at residues 72-93, 96-117, 120-141, 144-165, and 168-191; these read QVRSLLLDHNRVSALPPGAFAN, ALLYLDLRENRLRSVHARAFWG, VLQWLDLSSNQLETLPPGTFAP, ALSFLSLAGNRLALLEPSILGP, and LLRVLSLQDNSLSAIEAGLLNNLP. The LRRCT domain occupies 201 to 255; it reads NPWTCNCALRPLCTWLRKHPRPASETETLLCVSPRLQTLSLLTAFPDAAFKQCTQ. Cystine bridges form between Cys-205–Cys-231 and Cys-207–Cys-253. Residues 262 to 282 form a helical membrane-spanning segment; it reads LAVVYALGPVSFLASLAICLA. The Cytoplasmic portion of the chain corresponds to 283–331; sequence LGSVLTACGARRRRRRRTTVRHLLRRQLDPEGPPSLEDAGSPVTAAIQA. Positions 310 to 331 are disordered; sequence LDPEGPPSLEDAGSPVTAAIQA.

In terms of assembly, interacts with KCNMA1.

It is found in the cell membrane. It localises to the cytoplasm. Its subcellular location is the cytoskeleton. Auxiliary protein of the large-conductance, voltage and calcium-activated potassium channel (BK alpha). Required for the conversion of BK alpha channels from a high-voltage to a low-voltage activated channel type in non-excitable cells. These are characterized by negative membrane voltages and constant low levels of calcium. This chain is Leucine-rich repeat-containing protein 26 (Lrrc26), found in Mus musculus (Mouse).